A 336-amino-acid chain; its full sequence is UDP-3-O-acylglucosamine N-acyltransferase (336 aa).

Catalysis depends on His233, which acts as the Proton acceptor.

Belongs to the transferase hexapeptide repeat family. LpxD subfamily. Homotrimer.

It carries out the reaction a UDP-3-O-[(3R)-3-hydroxyacyl]-alpha-D-glucosamine + a (3R)-hydroxyacyl-[ACP] = a UDP-2-N,3-O-bis[(3R)-3-hydroxyacyl]-alpha-D-glucosamine + holo-[ACP] + H(+). It participates in bacterial outer membrane biogenesis; LPS lipid A biosynthesis. In terms of biological role, catalyzes the N-acylation of UDP-3-O-acylglucosamine using 3-hydroxyacyl-ACP as the acyl donor. Is involved in the biosynthesis of lipid A, a phosphorylated glycolipid that anchors the lipopolysaccharide to the outer membrane of the cell. In Helicobacter pylori (strain HPAG1), this protein is UDP-3-O-acylglucosamine N-acyltransferase.